The chain runs to 1396 residues: Major capsid protein (1396 aa).

The protein belongs to the herpesviridae major capsid protein family. In terms of assembly, homomultimer. Makes the hexons and eleven out of twelve pentons. Interacts with triplex proteins 1/TRX1 and 2/TRX2; adjacent capsomers are linked together in groups of three by triplexes, heterotrimeric complexes composed of one molecule of TRX1 and two molecules of TRX2. Interacts with scaffold protein; this interaction allows efficient MCP transport to the host nucleus. Interacts with capsid vertex component 2/CVC2. Interacts with the small capsomere-interacting protein/SCP.

It is found in the virion. It localises to the host nucleus. Self-assembles to form an icosahedral capsid with a T=16 symmetry, about 200 nm in diameter, and consisting of 150 hexons and 12 pentons (total of 162 capsomers). Hexons form the edges and faces of the capsid and are each composed of six MCP molecules. In contrast, one penton is found at each of the 12 vertices. Eleven of the pentons are MCP pentamers, while the last vertex is occupied by the portal complex. The capsid is surrounded by a layer of proteinaceous material designated the tegument which, in turn, is enclosed in an envelope of host cell-derived lipids containing virus-encoded glycoproteins. This chain is Major capsid protein, found in Varicella-zoster virus (strain Dumas) (HHV-3).